The following is a 667-amino-acid chain: MSDMIRVTLPDGSAREVARGTTPAEIAAAIGPGLAKAALAAKIDGELRDIMRPLEEDTNLALVTSRDEADALELARHDYAHVLAEAVQTLFPGTQITFGPATSDGFYYDFAPTAEHGPFRDEELPLIEEEMRRIIAADKPLRREVWDRDALIARWKKDGETFKAEWAAELPAGEEISVYWSGDDWMDMCRGPHLASTGKLDPAAFKLTRVSGAYWRGDQKNAQLSRIYGTGWLNRKQLAEHLVRLEEAAKRDHRRLGQEMDLFHLQQEAHGSVFWHPNGFVVWRELEAYMRRAIDAAGYREVKTPQVMDARQWEQSGHWGKYRENMFVIPDEVPNTEDEGPIVSDDAEWMALKPMNCPAHVLIFRQGMKSYRDLPLRLYENGCCHRNEPHGALHGLMRVRQFTQDDAHIFCREDQIVEEVRNFCALADRIYKDFGFTYAIKLALRPEKRFGSDAMWDKSEDELRNAVIEAGLATEQYGWEELPGEGAFYAPKLEWHLTDAIGRTWQVGTIQSDRVLPDRLDASYIGEDGERHRPVMLHRAIFGSYERFIGILIEHFVGRFPTWLAPVQAVVATIVSDADDYAKAATARLVAAGIRTESDLRNEKINYKVREHSLAKVPHLLVVGKREAEEGTVAIRTLGQDGQRIMPLAEAIAMLKTQATPPDLKVR.

In terms of domain architecture, TGS spans 3–64; it reads DMIRVTLPDG…EEDTNLALVT (62 aa). The tract at residues 252-561 is catalytic; that stretch reads DHRRLGQEMD…LIEHFVGRFP (310 aa). Positions 357, 408, and 538 each coordinate Zn(2+).

It belongs to the class-II aminoacyl-tRNA synthetase family. Homodimer. Zn(2+) serves as cofactor.

The protein localises to the cytoplasm. The catalysed reaction is tRNA(Thr) + L-threonine + ATP = L-threonyl-tRNA(Thr) + AMP + diphosphate + H(+). Catalyzes the attachment of threonine to tRNA(Thr) in a two-step reaction: L-threonine is first activated by ATP to form Thr-AMP and then transferred to the acceptor end of tRNA(Thr). Also edits incorrectly charged L-seryl-tRNA(Thr). The chain is Threonine--tRNA ligase from Sphingopyxis alaskensis (strain DSM 13593 / LMG 18877 / RB2256) (Sphingomonas alaskensis).